The chain runs to 241 residues: Hybrid peroxiredoxin hyPrx5 (241 aa).

Residues 3-167 (SMEGKKVPQV…MLKYLAPQHQ (165 aa)) enclose the Thioredoxin domain. The Cysteine sulfenic acid (-SOH) intermediate; for peroxiredoxin activity role is filled by cysteine 49. Positions 170 to 241 (ESISIFTKPG…GSDDLEKYFA (72 aa)) constitute a Glutaredoxin domain. A disulfide bridge connects residues cysteine 180 and cysteine 183.

This sequence in the N-terminal section; belongs to the peroxiredoxin family. Prx5 subfamily. It in the C-terminal section; belongs to the glutaredoxin family. As to quaternary structure, homotetramer; interconnecting Prx and Grx domains of different monomers.

The catalysed reaction is a hydroperoxide + 2 glutathione = an alcohol + glutathione disulfide + H2O. In terms of biological role, thiol-specific peroxidase that catalyzes the reduction of hydrogen peroxide and organic hydroperoxides to water and alcohols, respectively. Plays a role in cell protection against oxidative stress by detoxifying peroxides. This is Hybrid peroxiredoxin hyPrx5 (PGdx) from Haemophilus influenzae (strain ATCC 51907 / DSM 11121 / KW20 / Rd).